Here is a 208-residue protein sequence, read N- to C-terminus: Small ribosomal subunit protein uS4B (208 aa).

The S4 RNA-binding domain maps to 95 to 160 (KRLDNVVFRL…NQVYMAAKQA (66 aa)).

It belongs to the universal ribosomal protein uS4 family. Part of the 30S ribosomal subunit. Contacts protein S5. The interaction surface between S4 and S5 is involved in control of translational fidelity.

Functionally, one of the primary rRNA binding proteins, it binds directly to 16S rRNA where it nucleates assembly of the body of the 30S subunit. With S5 and S12 plays an important role in translational accuracy. The protein is Small ribosomal subunit protein uS4B of Bdellovibrio bacteriovorus (strain ATCC 15356 / DSM 50701 / NCIMB 9529 / HD100).